Here is a 621-residue protein sequence, read N- to C-terminus: MRRSVCYVTPSVARAGQISTWRFEYSSANFLPEGTLLKFDLGIDGRPIDWEIPSTDLSQPCNTIYLETPSESIVTAKAVYAPGSYIPTFEFILPCEIEAGDTFSIILGSSPNFPQEDASGNGAQLFTQRRKPFSLYVDPTGKGNFEDPDIFTIDIRGNVLKNIRIFAPSYVVKNKRFDITVRFEDEFGNLTNFSPEETQIELSYEHLRENLSWQLFIPETGFVILPNLYFNEPGIYRIQLRNQATKEIFTSAPIKCFTETSPHLLWGLLHGESERVDSEGNIESCLRYFRDDCALNFFATSSFEIQDGLTPETIKSINQTVSDFNEEDRFIALSGAQYVSEEPGEGIREVLLIKEPKSPGKHKECKLFPLSKLYKQSTSHELISIPSFTASKKFGCDFQNFHAEFERVVEIYNAWGCSERTEAEGNPFPIKGSIDSENPEGTILSALKRNLRFGFVAGGLDDRNLYSNFFDSDQQQYSPGLTAVICNKYSRDSLLEALYQRQCYATTGQRIIVSFQITSAPMGSELSTAIKPGLMINRHISGYVAGTAKISTIEIIRNGDTLHTFYPDGNNFEYEYDDLTPFAQATLADPKNGAPFAFYYLRVTQENGAMAWSSPIWIDLN.

It belongs to the chlamydial CPn_0512/CT_425/TC_0708 family.

This is an uncharacterized protein from Chlamydia muridarum (strain MoPn / Nigg).